The primary structure comprises 299 residues: N-acetylmuramic acid 6-phosphate etherase (299 aa).

Residues 57–220 enclose the SIS domain; it reads ISAAFHKKGR…TTGAMIRTGK (164 aa). Residue glutamate 85 is the Proton donor of the active site. The active site involves glutamate 116.

Belongs to the GCKR-like family. MurNAc-6-P etherase subfamily. In terms of assembly, homodimer.

It carries out the reaction N-acetyl-D-muramate 6-phosphate + H2O = N-acetyl-D-glucosamine 6-phosphate + (R)-lactate. Its pathway is amino-sugar metabolism; 1,6-anhydro-N-acetylmuramate degradation. It functions in the pathway amino-sugar metabolism; N-acetylmuramate degradation. It participates in cell wall biogenesis; peptidoglycan recycling. In terms of biological role, specifically catalyzes the cleavage of the D-lactyl ether substituent of MurNAc 6-phosphate, producing GlcNAc 6-phosphate and D-lactate. Together with AnmK, is also required for the utilization of anhydro-N-acetylmuramic acid (anhMurNAc) either imported from the medium or derived from its own cell wall murein, and thus plays a role in cell wall recycling. This Psychromonas ingrahamii (strain DSM 17664 / CCUG 51855 / 37) protein is N-acetylmuramic acid 6-phosphate etherase.